The chain runs to 253 residues: Imidazole glycerol phosphate synthase subunit HisF (253 aa).

Residues aspartate 11 and aspartate 130 contribute to the active site.

It belongs to the HisA/HisF family. In terms of assembly, heterodimer of HisH and HisF.

The protein localises to the cytoplasm. The catalysed reaction is 5-[(5-phospho-1-deoxy-D-ribulos-1-ylimino)methylamino]-1-(5-phospho-beta-D-ribosyl)imidazole-4-carboxamide + L-glutamine = D-erythro-1-(imidazol-4-yl)glycerol 3-phosphate + 5-amino-1-(5-phospho-beta-D-ribosyl)imidazole-4-carboxamide + L-glutamate + H(+). It functions in the pathway amino-acid biosynthesis; L-histidine biosynthesis; L-histidine from 5-phospho-alpha-D-ribose 1-diphosphate: step 5/9. Functionally, IGPS catalyzes the conversion of PRFAR and glutamine to IGP, AICAR and glutamate. The HisF subunit catalyzes the cyclization activity that produces IGP and AICAR from PRFAR using the ammonia provided by the HisH subunit. This chain is Imidazole glycerol phosphate synthase subunit HisF, found in Clostridium botulinum (strain Langeland / NCTC 10281 / Type F).